The following is an 882-amino-acid chain: Probable LRR receptor-like serine/threonine-protein kinase At1g12460 (882 aa).

Residues 1–21 form the signal peptide; the sequence is MRKVHLFLVLVHFIYISTSRS. Over 22-515 the chain is Extracellular; the sequence is DSISERDILL…SRNSDALSIS (494 aa). N76 carries N-linked (GlcNAc...) asparagine glycosylation. 16 LRR repeats span residues 92 to 113, 116 to 138, 140 to 162, 165 to 187, 189 to 210, 213 to 235, 237 to 258, 261 to 283, 285 to 308, 309 to 331, 333 to 355, 357 to 379, 381 to 404, 405 to 427, 429 to 451, and 453 to 475; these read FIRVLNLFGNRFTGNLPLDYFK, TLWTINVSSNALSGPIPEFISEL, SLRFLDLSKNGFTGEIPVSLFKF, KTKFVSLAHNNIFGSIPASIVNC, NLVGFDFSYNNLKGVLPPRICD, VLEYISVRNNLLSGDVSEEIQKC, RLILVDLGSNLFHGLAPFAVLT, NITYFNVSWNRFGGEIGEIVDCS, SLEFLDASSNELTGRIPTGVMGCK, SLKLLDLESNKLNGSIPGSIGKM, SLSVIRLGNNSIDGVIPRDIGSL, FLQVLNLHNLNLIGEVPEDISNC, VLLELDVSGNDLEGKISKKLLNLT, NIKILDLHRNRLNGSIPPELGNL, KVQFLDLSQNSLSGPIPSSLGSL, and TLTHFNVSYNNLSGVIPPVPMIQ. N-linked (GlcNAc...) asparagine glycosylation is present at N121. N-linked (GlcNAc...) asparagine glycosylation is found at N261 and N266. Residues N321 and N341 are each glycosylated (N-linked (GlcNAc...) asparagine). N-linked (GlcNAc...) asparagine glycans are attached at residues N402, N417, and N426. 2 N-linked (GlcNAc...) asparagine glycosylation sites follow: N458 and N463. Residues 516 to 536 traverse the membrane as a helical segment; it reads VIIVIIAAAVILFGVCIVLAL. Topologically, residues 537 to 882 are cytoplasmic; that stretch reads NLRARKRRKD…LESIRNGFGS (346 aa). T589 is subject to Phosphothreonine. In terms of domain architecture, Protein kinase spans 593–876; that stretch reads LDKENIIGMG…AEVVQVLESI (284 aa). Residues 599 to 607 and K621 each bind ATP; that span reads IGMGSIGSV. Phosphotyrosine is present on Y770.

The protein belongs to the protein kinase superfamily. Ser/Thr protein kinase family.

It is found in the cell membrane. It catalyses the reaction L-seryl-[protein] + ATP = O-phospho-L-seryl-[protein] + ADP + H(+). The catalysed reaction is L-threonyl-[protein] + ATP = O-phospho-L-threonyl-[protein] + ADP + H(+). This Arabidopsis thaliana (Mouse-ear cress) protein is Probable LRR receptor-like serine/threonine-protein kinase At1g12460.